The chain runs to 239 residues: Large ribosomal subunit protein uL2 (239 aa).

The disordered stretch occupies residues 200 to 239 (VNHPHGGKEHHIGRPSTVSRRAPPGRKVGHIAARRTGRRK). Over residues 222–239 (PPGRKVGHIAARRTGRRK) the composition is skewed to basic residues.

This sequence belongs to the universal ribosomal protein uL2 family. Part of the 50S ribosomal subunit. Forms a bridge to the 30S subunit in the 70S ribosome.

Its function is as follows. One of the primary rRNA binding proteins. Required for association of the 30S and 50S subunits to form the 70S ribosome, for tRNA binding and peptide bond formation. It has been suggested to have peptidyltransferase activity; this is somewhat controversial. Makes several contacts with the 16S rRNA in the 70S ribosome. The polypeptide is Large ribosomal subunit protein uL2 (Thermococcus onnurineus (strain NA1)).